We begin with the raw amino-acid sequence, 434 residues long: D-amino acid dehydrogenase (434 aa).

FAD is bound at residue 3–17 (VVILGSGVVGVTSAW).

This sequence belongs to the DadA oxidoreductase family. It depends on FAD as a cofactor.

It catalyses the reaction a D-alpha-amino acid + A + H2O = a 2-oxocarboxylate + AH2 + NH4(+). It functions in the pathway amino-acid degradation; D-alanine degradation; NH(3) and pyruvate from D-alanine: step 1/1. Functionally, oxidative deamination of D-amino acids. This is D-amino acid dehydrogenase from Yersinia pseudotuberculosis serotype O:3 (strain YPIII).